Here is a 331-residue protein sequence, read N- to C-terminus: Major ferric iron-binding protein (331 aa).

A signal peptide spans methionine 1–alanine 22. Fe cation is bound by residues histidine 31, glutamate 79, tyrosine 217, and tyrosine 218.

Belongs to the bacterial solute-binding protein 1 family.

The protein resides in the periplasm. Functionally, this protein may be a central component in the iron-acquisition system. In Neisseria meningitidis serogroup B (strain ATCC BAA-335 / MC58), this protein is Major ferric iron-binding protein (fbpA).